Here is a 90-residue protein sequence, read N- to C-terminus: DNA-directed RNA polymerase subunit omega (90 aa).

This sequence belongs to the RNA polymerase subunit omega family. As to quaternary structure, the RNAP catalytic core consists of 2 alpha, 1 beta, 1 beta' and 1 omega subunit. When a sigma factor is associated with the core the holoenzyme is formed, which can initiate transcription.

It carries out the reaction RNA(n) + a ribonucleoside 5'-triphosphate = RNA(n+1) + diphosphate. Functionally, promotes RNA polymerase assembly. Latches the N- and C-terminal regions of the beta' subunit thereby facilitating its interaction with the beta and alpha subunits. The chain is DNA-directed RNA polymerase subunit omega from Alteromonas mediterranea (strain DSM 17117 / CIP 110805 / LMG 28347 / Deep ecotype).